The following is a 328-amino-acid chain: D-cysteine desulfhydrase (328 aa).

At Lys-51 the chain carries N6-(pyridoxal phosphate)lysine.

Belongs to the ACC deaminase/D-cysteine desulfhydrase family. As to quaternary structure, homodimer. Requires pyridoxal 5'-phosphate as cofactor.

It carries out the reaction D-cysteine + H2O = hydrogen sulfide + pyruvate + NH4(+) + H(+). Its function is as follows. Catalyzes the alpha,beta-elimination reaction of D-cysteine and of several D-cysteine derivatives. It could be a defense mechanism against D-cysteine. In Escherichia coli O9:H4 (strain HS), this protein is D-cysteine desulfhydrase.